We begin with the raw amino-acid sequence, 92 residues long: Small ribosomal subunit protein uS19 (92 aa).

The protein belongs to the universal ribosomal protein uS19 family.

Its function is as follows. Protein S19 forms a complex with S13 that binds strongly to the 16S ribosomal RNA. This chain is Small ribosomal subunit protein uS19, found in Lactococcus lactis subsp. lactis (strain IL1403) (Streptococcus lactis).